Reading from the N-terminus, the 425-residue chain is Putative integrase/recombinase y4rF (425 aa).

One can recognise a Core-binding (CB) domain in the interval 123 to 210; it reads DPDALLLASF…HIRTFLRFLC (88 aa). Residues 233-418 enclose the Tyr recombinase domain; sequence HLPPRLAWGD…AASQLAEVAL (186 aa). Active-site residues include arginine 273, lysine 298, histidine 370, arginine 373, and histidine 396. The active-site O-(3'-phospho-DNA)-tyrosine intermediate is the tyrosine 405.

The protein belongs to the 'phage' integrase family.

The polypeptide is Putative integrase/recombinase y4rF (Sinorhizobium fredii (strain NBRC 101917 / NGR234)).